A 327-amino-acid chain; its full sequence is Lipoyl synthase (327 aa).

[4Fe-4S] cluster-binding residues include cysteine 74, cysteine 79, cysteine 85, cysteine 100, cysteine 104, cysteine 107, and serine 314. Residues 86-303 (FSGGTATFMI…AEEGERMGFK (218 aa)) form the Radical SAM core domain.

It belongs to the radical SAM superfamily. Lipoyl synthase family. The cofactor is [4Fe-4S] cluster.

Its subcellular location is the cytoplasm. It catalyses the reaction [[Fe-S] cluster scaffold protein carrying a second [4Fe-4S](2+) cluster] + N(6)-octanoyl-L-lysyl-[protein] + 2 oxidized [2Fe-2S]-[ferredoxin] + 2 S-adenosyl-L-methionine + 4 H(+) = [[Fe-S] cluster scaffold protein] + N(6)-[(R)-dihydrolipoyl]-L-lysyl-[protein] + 4 Fe(3+) + 2 hydrogen sulfide + 2 5'-deoxyadenosine + 2 L-methionine + 2 reduced [2Fe-2S]-[ferredoxin]. It participates in protein modification; protein lipoylation via endogenous pathway; protein N(6)-(lipoyl)lysine from octanoyl-[acyl-carrier-protein]: step 2/2. Catalyzes the radical-mediated insertion of two sulfur atoms into the C-6 and C-8 positions of the octanoyl moiety bound to the lipoyl domains of lipoate-dependent enzymes, thereby converting the octanoylated domains into lipoylated derivatives. This Pseudomonas paraeruginosa (strain DSM 24068 / PA7) (Pseudomonas aeruginosa (strain PA7)) protein is Lipoyl synthase.